The chain runs to 129 residues: M-zodatoxin-Lt8h (129 aa).

The N-terminal stretch at 1–20 (MKYFVVALALVAAFACIAES) is a signal peptide. The propeptide occupies 21–60 (KPAESEHELAEVEEENELADLEDAVWLEDLADLSDLEETR).

The protein belongs to the cationic peptide 06 (cytoinsectotoxin) family. Expressed by the venom gland.

The protein resides in the secreted. Functionally, insecticidal, cytolytic and antimicrobial peptide. Has insecticidal activity against the flesh fly S.carnaria. Has antibacterial activity against the Gram-negative bacteria E.coli. Forms voltage-dependent, ion-permeable channels in membranes. At high concentration causes cell membrane lysis. The protein is M-zodatoxin-Lt8h (cit 1-11) of Lachesana tarabaevi (Spider).